The primary structure comprises 450 residues: Nuclear hormone receptor family member nhr-40 (450 aa).

The segment at residues 28–103 (GTLCVVCSDF…MGMDPKAIQH (76 aa)) is a DNA-binding region (nuclear receptor). NR C4-type zinc fingers lie at residues 31–51 (CVVC…CNGC) and 67–91 (CQFS…LKKC). The NR LBD domain maps to 173–450 (DVKAVIEDLL…LIDQLIIVGL (278 aa)).

The protein belongs to the nuclear hormone receptor family. Isoform b: Expressed in body wall muscle cells, pharyngeal muscles, rectal gland cells, vulval and uterine muscles and neurons in the head and ventral nerve cord. Isoform c: Expressed in body wall muscle cells, neurons in the head, nerve ring, ventral and dorsal nerve cords and epidermal cells in the tail.

It is found in the nucleus. Functionally, orphan nuclear receptor. Plays a role in morphogenesis and elongation during embryonic and larval development. Plays a role in muscle formation and motility. The chain is Nuclear hormone receptor family member nhr-40 from Caenorhabditis elegans.